Reading from the N-terminus, the 238-residue chain is Large ribosomal subunit protein uL5c (238 aa).

This sequence belongs to the universal ribosomal protein uL5 family. In terms of assembly, part of the 50S ribosomal subunit; contacts the 5S rRNA.

Its subcellular location is the plastid. It localises to the chloroplast. In terms of biological role, binds 5S rRNA, forms part of the central protuberance of the 50S subunit. This chain is Large ribosomal subunit protein uL5c (rpl5), found in Phaeodactylum tricornutum (strain CCAP 1055/1).